The chain runs to 247 residues: UPF0659 protein C216.03 (247 aa).

The protein belongs to the UPF0659 family.

It is found in the cytoplasm. The protein resides in the nucleus. In Schizosaccharomyces pombe (strain 972 / ATCC 24843) (Fission yeast), this protein is UPF0659 protein C216.03.